Here is a 60-residue protein sequence, read N- to C-terminus: Large ribosomal subunit protein uL30 (60 aa).

The protein belongs to the universal ribosomal protein uL30 family. Part of the 50S ribosomal subunit.

The protein is Large ribosomal subunit protein uL30 of Polaromonas naphthalenivorans (strain CJ2).